The sequence spans 117 residues: Large ribosomal subunit protein uL24 (117 aa).

This sequence belongs to the universal ribosomal protein uL24 family. As to quaternary structure, part of the 50S ribosomal subunit.

Functionally, one of two assembly initiator proteins, it binds directly to the 5'-end of the 23S rRNA, where it nucleates assembly of the 50S subunit. Its function is as follows. One of the proteins that surrounds the polypeptide exit tunnel on the outside of the subunit. In Thermosynechococcus vestitus (strain NIES-2133 / IAM M-273 / BP-1), this protein is Large ribosomal subunit protein uL24.